A 323-amino-acid chain; its full sequence is GTP 3',8-cyclase (323 aa).

Residues Thr-4–Asn-226 form the Radical SAM core domain. A GTP-binding site is contributed by Arg-13. [4Fe-4S] cluster contacts are provided by Cys-20 and Cys-24. Residue Tyr-26 coordinates S-adenosyl-L-methionine. Cys-27 lines the [4Fe-4S] cluster pocket. Arg-63 lines the GTP pocket. Gly-67 contributes to the S-adenosyl-L-methionine binding site. Thr-94 is a GTP binding site. Ser-118 serves as a coordination point for S-adenosyl-L-methionine. Lys-155 lines the GTP pocket. Met-189 contributes to the S-adenosyl-L-methionine binding site. Positions 252 and 255 each coordinate [4Fe-4S] cluster. Residue Arg-257–Arg-259 coordinates GTP. Cys-269 lines the [4Fe-4S] cluster pocket.

This sequence belongs to the radical SAM superfamily. MoaA family. Monomer and homodimer. It depends on [4Fe-4S] cluster as a cofactor.

It carries out the reaction GTP + AH2 + S-adenosyl-L-methionine = (8S)-3',8-cyclo-7,8-dihydroguanosine 5'-triphosphate + 5'-deoxyadenosine + L-methionine + A + H(+). It functions in the pathway cofactor biosynthesis; molybdopterin biosynthesis. Catalyzes the cyclization of GTP to (8S)-3',8-cyclo-7,8-dihydroguanosine 5'-triphosphate. This is GTP 3',8-cyclase from Moorella thermoacetica (strain ATCC 39073 / JCM 9320).